The following is a 95-amino-acid chain: Glutamyl-tRNA(Gln) amidotransferase subunit C (95 aa).

The protein belongs to the GatC family. In terms of assembly, heterotrimer of A, B and C subunits.

It catalyses the reaction L-glutamyl-tRNA(Gln) + L-glutamine + ATP + H2O = L-glutaminyl-tRNA(Gln) + L-glutamate + ADP + phosphate + H(+). It carries out the reaction L-aspartyl-tRNA(Asn) + L-glutamine + ATP + H2O = L-asparaginyl-tRNA(Asn) + L-glutamate + ADP + phosphate + 2 H(+). Allows the formation of correctly charged Asn-tRNA(Asn) or Gln-tRNA(Gln) through the transamidation of misacylated Asp-tRNA(Asn) or Glu-tRNA(Gln) in organisms which lack either or both of asparaginyl-tRNA or glutaminyl-tRNA synthetases. The reaction takes place in the presence of glutamine and ATP through an activated phospho-Asp-tRNA(Asn) or phospho-Glu-tRNA(Gln). The polypeptide is Glutamyl-tRNA(Gln) amidotransferase subunit C (Rhizobium meliloti (strain 1021) (Ensifer meliloti)).